The following is a 180-amino-acid chain: UPF0340 protein YwlG (180 aa).

It belongs to the UPF0340 family.

This chain is UPF0340 protein YwlG (ywlG), found in Bacillus subtilis (strain 168).